The sequence spans 854 residues: Armadillo repeat-containing protein 2 (854 aa).

Disordered stretches follow at residues 1–116, 140–194, and 206–255; these read MLSS…SFPK, QGML…PLLT, and EVSL…ETDT. A compositionally biased stretch (low complexity) spans 58–73; that stretch reads PASSRSPENRPPSSFS. Composition is skewed to polar residues over residues 74 to 87 and 162 to 187; these read LHAS…SKPI and KPVS…TGQL. ARM repeat units lie at residues 255–294, 298–337, 356–396, 401–442, 455–496, 499–540, 544–583, 585–605, 606–649, 651–692, 694–733, and 735–777; these read TEVD…RTLE, MLGK…ALKV, EKND…ALKF, PGFL…HLLV, PLTR…KLTS, DCCA…NLTA, QARE…EAKP, AEAE…AIHP, RIGP…NLSF, QVKS…NLSQ, HDVC…NLTV, and KEKR…NFSE.

Its function is as follows. Required for sperm flagellum axoneme organization and function. Involved in axonemal central pair complex assembly and/or stability. The protein is Armadillo repeat-containing protein 2 of Mus musculus (Mouse).